The primary structure comprises 371 residues: UDP-N-acetylglucosamine--N-acetylmuramyl-(pentapeptide) pyrophosphoryl-undecaprenol N-acetylglucosamine transferase (371 aa).

Residues 10 to 12 (TGG), Asn124, Arg166, Ser196, and Gln301 each bind UDP-N-acetyl-alpha-D-glucosamine.

Belongs to the glycosyltransferase 28 family. MurG subfamily.

It localises to the cell membrane. The enzyme catalyses di-trans,octa-cis-undecaprenyl diphospho-N-acetyl-alpha-D-muramoyl-L-alanyl-D-glutamyl-meso-2,6-diaminopimeloyl-D-alanyl-D-alanine + UDP-N-acetyl-alpha-D-glucosamine = di-trans,octa-cis-undecaprenyl diphospho-[N-acetyl-alpha-D-glucosaminyl-(1-&gt;4)]-N-acetyl-alpha-D-muramoyl-L-alanyl-D-glutamyl-meso-2,6-diaminopimeloyl-D-alanyl-D-alanine + UDP + H(+). The protein operates within cell wall biogenesis; peptidoglycan biosynthesis. Cell wall formation. Catalyzes the transfer of a GlcNAc subunit on undecaprenyl-pyrophosphoryl-MurNAc-pentapeptide (lipid intermediate I) to form undecaprenyl-pyrophosphoryl-MurNAc-(pentapeptide)GlcNAc (lipid intermediate II). In Moorella thermoacetica (strain ATCC 39073 / JCM 9320), this protein is UDP-N-acetylglucosamine--N-acetylmuramyl-(pentapeptide) pyrophosphoryl-undecaprenol N-acetylglucosamine transferase.